We begin with the raw amino-acid sequence, 21 residues long: Venom peptide Tv1 (21 aa).

3 cysteine pairs are disulfide-bonded: cysteine 4–cysteine 20, cysteine 5–cysteine 21, and cysteine 7–cysteine 16.

Expressed by the salivary gland. This peptide is considered as a venom peptide.

The protein localises to the secreted. Functionally, injections of 20 uM of this synthetic peptide (Ile) causes partial paralysis to polychaete worms (Nereis virens), the natural prey of terebrid snails. This paralysis may be due to an inhibition of nicotinic receptors at the neuromuscular junction. This chain is Venom peptide Tv1, found in Terebra variegata (Variegate auger snail).